A 452-amino-acid polypeptide reads, in one-letter code: Probable ECA polymerase (452 aa).

The next 11 helical transmembrane spans lie at 6-26 (FSGLLVVWLLSTLFIATLTWF), 37-57 (VFFSLLFLLTFFFGFPLTSVL), 63-83 (VGVAPPEILLQALLSAACFYG), 118-138 (VILMGIALVSVAIFFMHNGFL), 155-175 (GVALKRFFYFFIPAMLVVYFL), 181-201 (AWLFFLVSTVAFGLLTYMIVG), 207-227 (IIIAFAIFLFIGIIRGWISLW), 228-248 (MLAAAGVLGIVGMFWLALKRY), 341-361 (LVVMGGALFIPLGAIVVGLII), 378-398 (YKAAILHSFCFGAIFNMIVLA), and 410-430 (VFFLVVFGASLLVAKLLFWLF).

Belongs to the WzyE family. In terms of assembly, probably part of a complex composed of WzxE, WzyE and WzzE.

It is found in the cell inner membrane. Its pathway is bacterial outer membrane biogenesis; enterobacterial common antigen biosynthesis. In terms of biological role, probably involved in the polymerization of enterobacterial common antigen (ECA) trisaccharide repeat units. In Salmonella heidelberg (strain SL476), this protein is Probable ECA polymerase.